Consider the following 638-residue polypeptide: 1-deoxy-D-xylulose-5-phosphate synthase (638 aa).

Thiamine diphosphate contacts are provided by residues His72 and 113 to 115 (GHA). Asp144 lines the Mg(2+) pocket. Thiamine diphosphate contacts are provided by residues 145 to 146 (GA), Asn174, Tyr289, and Glu372. Asn174 is a Mg(2+) binding site.

Belongs to the transketolase family. DXPS subfamily. As to quaternary structure, homodimer. Mg(2+) is required as a cofactor. Thiamine diphosphate serves as cofactor.

The catalysed reaction is D-glyceraldehyde 3-phosphate + pyruvate + H(+) = 1-deoxy-D-xylulose 5-phosphate + CO2. The protein operates within metabolic intermediate biosynthesis; 1-deoxy-D-xylulose 5-phosphate biosynthesis; 1-deoxy-D-xylulose 5-phosphate from D-glyceraldehyde 3-phosphate and pyruvate: step 1/1. Its function is as follows. Catalyzes the acyloin condensation reaction between C atoms 2 and 3 of pyruvate and glyceraldehyde 3-phosphate to yield 1-deoxy-D-xylulose-5-phosphate (DXP). In Gloeobacter violaceus (strain ATCC 29082 / PCC 7421), this protein is 1-deoxy-D-xylulose-5-phosphate synthase.